A 778-amino-acid polypeptide reads, in one-letter code: Probable cation-transporting ATPase exp7 (778 aa).

Over 1–37 (MDKNKIMGLTQREVKERQAEGLVNDFTASASTSTWQI) the chain is Cytoplasmic. The chain crosses the membrane as a helical span at residues 38–57 (VKRNVFTLFNALNFAIALAL). Topologically, residues 58-64 (AFVQAWS) are extracellular. Residues 65–84 (NLVFFAVICFNAFSGIVTEL) traverse the membrane as a helical segment. At 85-209 (RAKHMVDKLN…PINSRIMKSL (125 aa)) the chain is on the cytoplasmic side. The helical transmembrane segment at 210-229 (DKLAGFTGKIIIPFGLALLL) threads the bilayer. Residues 230 to 242 (EALLLKGLPLKSS) lie on the Extracellular side of the membrane. A helical transmembrane segment spans residues 243–260 (VVNSSTALLGMLPKGIAL). At 261-586 (LTITSLLTAV…FEGRRVVNNI (326 aa)) the chain is on the cytoplasmic side. Catalysis depends on aspartate 298, which acts as the 4-aspartylphosphate intermediate. Aspartate 532 and aspartate 536 together coordinate Mg(2+). Residues 587–606 (AHIAPIFLIKTIYSFLLAVI) traverse the membrane as a helical segment. Residues 607–624 (CIASALLGRSEWILIFPF) are Extracellular-facing. The helical transmembrane segment at 625 to 645 (IPIQITMIDQFVEGFPPFVLT) threads the bilayer. Residues 646–663 (FERNIKPVEQNFLRKSML) lie on the Cytoplasmic side of the membrane. The helical transmembrane segment at 664–684 (RALPSALMVVFSVLFVKMFGA) threads the bilayer. Topologically, residues 685-689 (SQGWS) are extracellular. A helical transmembrane segment spans residues 690–708 (ELEISTLLYYLLGSIGFLS). Residues 709 to 716 (VFRACMPF) lie on the Cytoplasmic side of the membrane. A helical membrane pass occupies residues 717 to 739 (TLWRVLLIVWSVGGFLATALFPR). Residues 740-757 (IQKLLEISTLTEQTLPVY) are Extracellular-facing. The chain crosses the membrane as a helical span at residues 758–777 (GVMMLVFTVIFILTSRYQAK). Lysine 778 is a topological domain (cytoplasmic).

It belongs to the cation transport ATPase (P-type) (TC 3.A.3) family.

The protein resides in the cell membrane. It catalyses the reaction ATP + H2O = ADP + phosphate + H(+). The protein is Probable cation-transporting ATPase exp7 (exp7) of Streptococcus pneumoniae serotype 4 (strain ATCC BAA-334 / TIGR4).